The primary structure comprises 340 residues: Phosphoribosylformylglycinamidine cyclo-ligase (340 aa).

This sequence belongs to the AIR synthase family.

The protein localises to the cytoplasm. It catalyses the reaction 2-formamido-N(1)-(5-O-phospho-beta-D-ribosyl)acetamidine + ATP = 5-amino-1-(5-phospho-beta-D-ribosyl)imidazole + ADP + phosphate + H(+). Its pathway is purine metabolism; IMP biosynthesis via de novo pathway; 5-amino-1-(5-phospho-D-ribosyl)imidazole from N(2)-formyl-N(1)-(5-phospho-D-ribosyl)glycinamide: step 2/2. The polypeptide is Phosphoribosylformylglycinamidine cyclo-ligase (Streptococcus pneumoniae serotype 19F (strain G54)).